Reading from the N-terminus, the 663-residue chain is DNA ligase (663 aa).

Residues 33-37 (DYSYD), 82-83 (SI), and Glu112 contribute to the NAD(+) site. Lys114 serves as the catalytic N6-AMP-lysine intermediate. Residues Arg135, Glu171, Lys285, and Lys309 each coordinate NAD(+). The Zn(2+) site is built by Cys403, Cys406, Cys419, and Cys424. A BRCT domain is found at 581 to 663 (DKEAPLQGKV…LRILDAKSVS (83 aa)).

The protein belongs to the NAD-dependent DNA ligase family. LigA subfamily. Mg(2+) serves as cofactor. It depends on Mn(2+) as a cofactor.

It catalyses the reaction NAD(+) + (deoxyribonucleotide)n-3'-hydroxyl + 5'-phospho-(deoxyribonucleotide)m = (deoxyribonucleotide)n+m + AMP + beta-nicotinamide D-nucleotide.. DNA ligase that catalyzes the formation of phosphodiester linkages between 5'-phosphoryl and 3'-hydroxyl groups in double-stranded DNA using NAD as a coenzyme and as the energy source for the reaction. It is essential for DNA replication and repair of damaged DNA. This Chlamydia trachomatis serovar D (strain ATCC VR-885 / DSM 19411 / UW-3/Cx) protein is DNA ligase.